We begin with the raw amino-acid sequence, 276 residues long: Protein-glutamine gamma-glutamyltransferase (276 aa).

It belongs to the bacillus TGase family.

The enzyme catalyses L-glutaminyl-[protein] + L-lysyl-[protein] = [protein]-L-lysyl-N(6)-5-L-glutamyl-[protein] + NH4(+). Its function is as follows. Probably plays a role in the assembly of the spore coat proteins by catalyzing epsilon-(gamma-glutamyl)lysine cross-links. This is Protein-glutamine gamma-glutamyltransferase from Bacillus anthracis (strain A0248).